The primary structure comprises 88 residues: U1-hexatoxin-Iw1d (88 aa).

An N-terminal signal peptide occupies residues 1 to 17 (LKFVVLICLVIMASTSA). Gln18 bears the Pyrrolidone carboxylic acid mark. Disulfide bonds link Cys20-Cys31, Cys25-Cys39, Cys30-Cys65, Cys49-Cys73, and Cys67-Cys80. Residues 86–88 (RSE) constitute a propeptide that is removed on maturation.

Belongs to the MIT-like AcTx family. In terms of tissue distribution, expressed by the venom gland.

Its subcellular location is the secreted. This chain is U1-hexatoxin-Iw1d, found in Illawarra wisharti (Illawarra funnel-web spider).